The chain runs to 295 residues: MMRILLFLATNLAVVLIASITLSLFGFNGFMAANGVDLNLNQLLVFCAVFGFAGSLFSLFISKWMAKMSTGTQIISQPRTRHEQWLLQTVEQLSRDAGIKMPEVGIFPAYEANAFATGWNKNDALVAVSQGLLERFSPDEVKAVLAHEIGHVANGDMVTLALVQGVVNTFVMFFARIIGNFVDKVIFKTENGQGIAYYITTIFAELVLGFLASAIVMWFSRKREFRADDAGARLAGTGAMIGALQRLRSEQGVPVNMPDSLTAFGINAGLKKGLAGLFMSHPPLEQRIEALRRRG.

The next 2 membrane-spanning stretches (helical) occupy residues 4 to 24 (ILLF…TLSL) and 42 to 62 (QLLV…LFIS). H147 lines the Zn(2+) pocket. Residue E148 is part of the active site. Zn(2+) is bound at residue H151. 2 helical membrane-spanning segments follow: residues 158–178 (VTLA…ARII) and 199–219 (ITTI…VMWF). E224 contacts Zn(2+).

This sequence belongs to the peptidase M48B family. Requires Zn(2+) as cofactor.

It localises to the cell inner membrane. The polypeptide is Protease HtpX (Pseudomonas syringae pv. syringae (strain B728a)).